The following is an 80-amino-acid chain: Peroxidase (80 aa).

The segment at 56 to 80 (DANEAEANSDLPGFNSSRSELEAAF) is disordered. Pro67 contacts substrate. Residue Asn70 is glycosylated (N-linked (GlcNAc...) asparagine).

This sequence belongs to the peroxidase family. Classical plant (class III) peroxidase subfamily. Ca(2+) is required as a cofactor. Heme b serves as cofactor.

The enzyme catalyses 2 a phenolic donor + H2O2 = 2 a phenolic radical donor + 2 H2O. Removal of H(2)O(2), oxidation of toxic reductants, biosynthesis and degradation of lignin, suberization, auxin catabolism, response to environmental stresses such as wounding, pathogen attack and oxidative stress. These functions might be dependent on each isozyme/isoform in each plant tissue. This is Peroxidase from Triticum aestivum (Wheat).